We begin with the raw amino-acid sequence, 572 residues long: Pentatricopeptide repeat-containing protein At1g26900, mitochondrial (572 aa).

Residues 1 to 117 constitute a mitochondrion transit peptide; that stretch reads MTLAITSRLR…RAFSVFNQLR (117 aa). PPR repeat units lie at residues 89-123, 124-158, 159-189, 191-225, 226-260, 261-291, 292-326, 327-361, 362-392, 393-427, 430-460, and 466-496; these read NLFM…GLTL, DRFS…GFMV, FTDL…MPQS, DAVT…EVVV, NVST…GLDL, DLHL…AIRK, DVVT…KMKP, NSST…RIAL, DAIL…MKDK, DVKS…NCKV, NEIT…MVEA, and KVEH…LPIT. The segment at 501–572 is type E motif; it reads AWRALLAACR…EAGYSAIEIE (72 aa).

This sequence belongs to the PPR family. PCMP-E subfamily.

The protein resides in the mitochondrion. The polypeptide is Pentatricopeptide repeat-containing protein At1g26900, mitochondrial (PCMP-E54) (Arabidopsis thaliana (Mouse-ear cress)).